The sequence spans 558 residues: Formate--tetrahydrofolate ligase (558 aa).

66–73 (TPAGEGKT) serves as a coordination point for ATP.

It belongs to the formate--tetrahydrofolate ligase family.

The catalysed reaction is (6S)-5,6,7,8-tetrahydrofolate + formate + ATP = (6R)-10-formyltetrahydrofolate + ADP + phosphate. The protein operates within one-carbon metabolism; tetrahydrofolate interconversion. The chain is Formate--tetrahydrofolate ligase from Neisseria gonorrhoeae (strain NCCP11945).